Here is an 819-residue protein sequence, read N- to C-terminus: Solute carrier organic anion transporter family member 74D (819 aa).

The interval 1–157 is disordered; the sequence is MTKSNGDVEA…GSSAESSSSC (157 aa). The Cytoplasmic segment spans residues 1 to 174; sequence MTKSNGDVEA…RWARRFASTH (174 aa). 3 stretches are compositionally biased toward polar residues: residues 24 to 34, 43 to 62, and 71 to 81; these read GHGQLNGNGYH, SQAFTPLLSQHNNGTTNGEV, and LYESTPSNNNE. Composition is skewed to low complexity over residues 91 to 111 and 144 to 157; these read LKNGLGNILSSNNNGTGNGHS and DLNGGSSAESSSSC. The helical transmembrane segment at 175–195 threads the bilayer; sequence VFMVVFLLAYILQGMYMTYFV. Over 196–213 the chain is Extracellular; sequence SVITTIEKLFQIKSKTTG. A helical membrane pass occupies residues 214-234; it reads ILLSASEMGQICTAMLLTYFA. The Cytoplasmic portion of the chain corresponds to 235–242; that stretch reads GRGHRPRW. The helical transmembrane segment at 243-263 threads the bilayer; sequence IACGMVLFSIAAFSCALPHFI. Residues 264-332 lie on the Extracellular side of the membrane; the sequence is FGEQLMHSSV…LEQASHSKIT (69 aa). N-linked (GlcNAc...) asparagine glycosylation is found at Asn284, Asn293, and Asn309. A helical transmembrane segment spans residues 333–353; that stretch reads VIVLCIFFGSLLSSGIGQTAV. At 354–373 the chain is on the cytoplasmic side; sequence ATLGIPYIDDNVGSKQSPMY. The helical transmembrane segment at 374–394 threads the bilayer; sequence MAVTIGMRILGPASGFIFGSF. At 395–413 the chain is on the extracellular side; that stretch reads CTRWYVNFSNPGFDATDPR. Asn401 is a glycosylation site (N-linked (GlcNAc...) asparagine). Residues 414–434 form a helical membrane-spanning segment; that stretch reads WIGAWWLGPVAIGSLMLLASI. The Cytoplasmic portion of the chain corresponds to 435–488; the sequence is AMFSFPKQLRGKQKPPGQTATPAAPVEPEEKPKLKDFPKTVRRQLSNDILMFRT. The tract at residues 444–466 is disordered; sequence RGKQKPPGQTATPAAPVEPEEKP. Residues 489–509 traverse the membrane as a helical segment; sequence ASCVFHLLPIAGLYTFLPKYL. Residues 510–522 are Extracellular-facing; it reads ETQFRLATYDANM. Residues 523-543 traverse the membrane as a helical segment; it reads IAAFCGILVMGIGIVISGLFI. Residues 544–553 lie on the Cytoplasmic side of the membrane; the sequence is LKRKPTARGV. The helical transmembrane segment at 554–574 threads the bilayer; that stretch reads AAWIAFTALVYSAGMIILMFI. Over 575–667 the chain is Extracellular; that stretch reads GCSMNDFAGY…NGYCDNNCKN (93 aa). In terms of domain architecture, Kazal-like spans 593–651; that stretch reads ALIEPTCSAALNCTCDKENFAPICADGKMYISACHAGCSSSSLRPSDNRTLYSDCACIP. Cystine bridges form between Cys599/Cys630, Cys607/Cys626, and Cys616/Cys649. The N-linked (GlcNAc...) asparagine glycan is linked to Asn604. N-linked (GlcNAc...) asparagine glycosylation occurs at Asn640. A helical membrane pass occupies residues 668-688; that stretch reads FIYFILIFAICVFMHSTSEVG. The Cytoplasmic segment spans residues 689–707; the sequence is SMLLVMRCTHPKDKAMAMG. A helical membrane pass occupies residues 708-728; that stretch reads VIQSAIGLFGNVPCPIIYGAV. The Extracellular segment spans residues 729 to 756; sequence VDSACLIWKSVCGKHGACSLYDADTFRQ. Residues 757 to 777 form a helical membrane-spanning segment; it reads YFLGITAGIMFLAFLMDLVVW. At 778-819 the chain is on the cytoplasmic side; it reads RKAHRIDIAPEDPQEGGPASNGRTLEVSESKQPITPAPDTTV. A disordered region spans residues 787-819; sequence PEDPQEGGPASNGRTLEVSESKQPITPAPDTTV. Polar residues predominate over residues 807-819; sequence SKQPITPAPDTTV.

Belongs to the organo anion transporter (TC 2.A.60) family.

The protein localises to the cell membrane. Its function is as follows. Transporter that mediates the cellular uptake of ecdysteroids, including ecdysone, from the hemolymph. This is Solute carrier organic anion transporter family member 74D from Drosophila melanogaster (Fruit fly).